The primary structure comprises 481 residues: 2-succinylbenzoate--CoA ligase (481 aa).

Belongs to the ATP-dependent AMP-binding enzyme family. MenE subfamily.

It catalyses the reaction 2-succinylbenzoate + ATP + CoA = 2-succinylbenzoyl-CoA + AMP + diphosphate. Its pathway is quinol/quinone metabolism; 1,4-dihydroxy-2-naphthoate biosynthesis; 1,4-dihydroxy-2-naphthoate from chorismate: step 5/7. The protein operates within quinol/quinone metabolism; menaquinone biosynthesis. Converts 2-succinylbenzoate (OSB) to 2-succinylbenzoyl-CoA (OSB-CoA). The sequence is that of 2-succinylbenzoate--CoA ligase from Bacillus cereus (strain Q1).